The chain runs to 103 residues: Pyrimidine/purine nucleoside phosphorylase (103 aa).

This sequence belongs to the nucleoside phosphorylase PpnP family.

It carries out the reaction a purine D-ribonucleoside + phosphate = a purine nucleobase + alpha-D-ribose 1-phosphate. The enzyme catalyses adenosine + phosphate = alpha-D-ribose 1-phosphate + adenine. The catalysed reaction is cytidine + phosphate = cytosine + alpha-D-ribose 1-phosphate. It catalyses the reaction guanosine + phosphate = alpha-D-ribose 1-phosphate + guanine. It carries out the reaction inosine + phosphate = alpha-D-ribose 1-phosphate + hypoxanthine. The enzyme catalyses thymidine + phosphate = 2-deoxy-alpha-D-ribose 1-phosphate + thymine. The catalysed reaction is uridine + phosphate = alpha-D-ribose 1-phosphate + uracil. It catalyses the reaction xanthosine + phosphate = alpha-D-ribose 1-phosphate + xanthine. In terms of biological role, catalyzes the phosphorolysis of diverse nucleosides, yielding D-ribose 1-phosphate and the respective free bases. Can use uridine, adenosine, guanosine, cytidine, thymidine, inosine and xanthosine as substrates. Also catalyzes the reverse reactions. The chain is Pyrimidine/purine nucleoside phosphorylase from Shewanella frigidimarina (strain NCIMB 400).